Consider the following 238-residue polypeptide: Ubiquinone biosynthesis O-methyltransferase (238 aa).

S-adenosyl-L-methionine contacts are provided by Arg40, Gly59, Asp80, and Met124.

The protein belongs to the methyltransferase superfamily. UbiG/COQ3 family.

It catalyses the reaction a 3-demethylubiquinol + S-adenosyl-L-methionine = a ubiquinol + S-adenosyl-L-homocysteine + H(+). The catalysed reaction is a 3-(all-trans-polyprenyl)benzene-1,2-diol + S-adenosyl-L-methionine = a 2-methoxy-6-(all-trans-polyprenyl)phenol + S-adenosyl-L-homocysteine + H(+). Its pathway is cofactor biosynthesis; ubiquinone biosynthesis. Functionally, O-methyltransferase that catalyzes the 2 O-methylation steps in the ubiquinone biosynthetic pathway. This is Ubiquinone biosynthesis O-methyltransferase from Ralstonia nicotianae (strain ATCC BAA-1114 / GMI1000) (Ralstonia solanacearum).